The chain runs to 350 residues: Ion-translocating oxidoreductase complex subunit D (350 aa).

A run of 5 helical transmembrane segments spans residues 20–40 (VMVLVILCLIPGVFLQSYFFG), 44–64 (LIQISLACLAALASEAFILKI), 68–88 (PVLNTLKDASALLTAILLAIS), 89–109 (IPPLAPWWIVVIGTIFAIIFV), and 125–145 (MAGYVLLLISFPVQMTSWLPV). Position 187 is an FMN phosphoryl threonine (T187). The next 5 helical transmembrane spans lie at 215-235 (SWQQIYWINGAFLAGGLILLF), 241-261 (WHIPMSFLLGIGIFSFIAFAY), 267-287 (APPLFHLFSGATMLGAFFILS), 300-320 (ILYALLIAFIVVIIRNVGGYP), and 322-342 (AVAFAVLLGNMCVPLIDYYTQ).

It belongs to the NqrB/RnfD family. As to quaternary structure, the complex is composed of six subunits: RnfA, RnfB, RnfC, RnfD, RnfE and RnfG. The cofactor is FMN.

It localises to the cell inner membrane. Functionally, part of a membrane-bound complex that couples electron transfer with translocation of ions across the membrane. The chain is Ion-translocating oxidoreductase complex subunit D from Psychromonas ingrahamii (strain DSM 17664 / CCUG 51855 / 37).